Reading from the N-terminus, the 910-residue chain is Valine--tRNA ligase (910 aa).

The short motif at P45 to H55 is the 'HIGH' region element. The short motif at K554 to S558 is the 'KMSKS' region element. K557 contributes to the ATP binding site. Positions D842–S910 form a coiled coil.

It belongs to the class-I aminoacyl-tRNA synthetase family. ValS type 1 subfamily. As to quaternary structure, monomer.

Its subcellular location is the cytoplasm. It carries out the reaction tRNA(Val) + L-valine + ATP = L-valyl-tRNA(Val) + AMP + diphosphate. Functionally, catalyzes the attachment of valine to tRNA(Val). As ValRS can inadvertently accommodate and process structurally similar amino acids such as threonine, to avoid such errors, it has a 'posttransfer' editing activity that hydrolyzes mischarged Thr-tRNA(Val) in a tRNA-dependent manner. The sequence is that of Valine--tRNA ligase from Brucella suis biovar 1 (strain 1330).